A 316-amino-acid polypeptide reads, in one-letter code: HPr kinase/phosphorylase (316 aa).

Residues histidine 146 and lysine 167 contribute to the active site. Glycine 161 to serine 168 contacts ATP. Mg(2+) is bound at residue serine 168. Aspartate 185 functions as the Proton acceptor; for phosphorylation activity. Proton donor; for dephosphorylation activity in the catalytic mechanism. Positions leucine 209–aspartate 218 are important for the catalytic mechanism of both phosphorylation and dephosphorylation. Glutamate 210 contributes to the Mg(2+) binding site. Arginine 252 is an active-site residue. Residues glutamine 273–arginine 278 form an important for the catalytic mechanism of dephosphorylation region.

This sequence belongs to the HPrK/P family. As to quaternary structure, homohexamer. The cofactor is Mg(2+).

The catalysed reaction is [HPr protein]-L-serine + ATP = [HPr protein]-O-phospho-L-serine + ADP + H(+). It catalyses the reaction [HPr protein]-O-phospho-L-serine + phosphate + H(+) = [HPr protein]-L-serine + diphosphate. Its function is as follows. Catalyzes the ATP- as well as the pyrophosphate-dependent phosphorylation of a specific serine residue in HPr, a phosphocarrier protein of the phosphoenolpyruvate-dependent sugar phosphotransferase system (PTS). HprK/P also catalyzes the pyrophosphate-producing, inorganic phosphate-dependent dephosphorylation (phosphorolysis) of seryl-phosphorylated HPr (P-Ser-HPr). This Polaromonas sp. (strain JS666 / ATCC BAA-500) protein is HPr kinase/phosphorylase.